The sequence spans 720 residues: Pro-neuregulin-3, membrane-bound isoform (720 aa).

Residues 1–360 lie on the Extracellular side of the membrane; the sequence is MSEGAAAASP…MESEEVYQRQ (360 aa). Disordered stretches follow at residues 28 to 48, 119 to 223, and 246 to 280; these read AAAAAAAGGGPDGGGEGAAEP, SSFP…AMPS, and PFQDAASSSSSSSSSATTTTPETSTSPKFHTTTYS. Positions 34–44 are enriched in gly residues; the sequence is AGGGPDGGGEG. A compositionally biased stretch (low complexity) spans 127-148; it reads TTTTTTSTTSPATPSAGGAASS. Over residues 149 to 163 the composition is skewed to polar residues; that stretch reads RTPNRISTRLTTITR. 2 stretches are compositionally biased toward low complexity: residues 187-205 and 250-271; these read TAAPATVPSTTAPFFSSST and AASSSSSSSSSATTTTPETSTS. The 44-residue stretch at 286 to 329 folds into the EGF-like domain; sequence HFKPCRDKDLAYCLNDGECFVIETLTGSHKHCRCKEGYQGVRCD. 3 cysteine pairs are disulfide-bonded: Cys290–Cys304, Cys298–Cys317, and Cys319–Cys328. A helical membrane pass occupies residues 361–381; sequence VLSISCIIFGIVIVGMFCAAF. At 382-720 the chain is on the cytoplasmic side; sequence YFKSKKQAKQ…EIQRDSALTK (339 aa). Residues 451–481 are disordered; that stretch reads PQSFPEVPSPDRGSQSVKHHRSLSSCCSPGQ.

It belongs to the neuregulin family. Interacts with ERBB4. Post-translationally, proteolytic cleavage close to the plasma membrane on the external face leads to the release of the soluble growth factor form. Extensive glycosylation precedes the proteolytic cleavage. Isoform 3 is glycosylated. As to expression, highly expressed in most regions of the brain with the exception of corpus callosum. Expressed at lower level in testis. Not detected in heart, placenta, lung, liver, skeletal muscle, kidney, pancreas, spleen, thymus, prostate, ovary, small intestine, colon and peripheral blood leukocytes.

The protein resides in the cell membrane. Its subcellular location is the secreted. Functionally, direct ligand for the ERBB4 tyrosine kinase receptor. Binding results in ligand-stimulated tyrosine phosphorylation and activation of the receptor. Does not bind to the EGF receptor, ERBB2 or ERBB3 receptors. May be a survival factor for oligodendrocytes. This Homo sapiens (Human) protein is Pro-neuregulin-3, membrane-bound isoform (NRG3).